Reading from the N-terminus, the 288-residue chain is GCN5-related N-acetyltransferase 6, chloroplastic (288 aa).

Residues Met1–Glu111 constitute a chloroplast transit peptide. An N-acetyltransferase domain is found at Ser151 to Ser288. Acetyl-CoA-binding positions include Leu215 to Val217, Arg223 to Cys228, Asn254 to Val256, and Tyr261. Residue Tyr261 is the Proton donor of the active site.

The protein belongs to the acetyltransferase family. GNAT subfamily. Oligomer. Autoacetylated. Expressed in green tissues and in roots.

It localises to the plastid. The protein localises to the chloroplast. Its subcellular location is the cytoplasm. It is found in the perinuclear region. It carries out the reaction an N-terminal L-alpha-aminoacyl-[protein] + acetyl-CoA = N-terminal N(alpha)-acetyl-L-alpha-aminoacyl-[protein] + CoA + H(+). It catalyses the reaction L-lysyl-[protein] + acetyl-CoA = N(6)-acetyl-L-lysyl-[protein] + CoA + H(+). The catalysed reaction is N-terminal L-alanyl-[protein] + acetyl-CoA = N-terminal N(alpha)-acetyl-L-alanyl-[protein] + CoA + H(+). The enzyme catalyses N-terminal L-seryl-[protein] + acetyl-CoA = N-terminal N(alpha)-acetyl-L-seryl-[protein] + CoA + H(+). It carries out the reaction N-terminal L-threonyl-[protein] + acetyl-CoA = N-terminal N(alpha)-acetyl-L-threonyl-[protein] + CoA + H(+). It catalyses the reaction N-terminal L-methionyl-[protein] + acetyl-CoA = N-terminal N(alpha)-acetyl-L-methionyl-[protein] + CoA + H(+). The catalysed reaction is N-terminal L-valyl-[protein] + acetyl-CoA = N-terminal N(alpha)-acetyl-L-valyl-[protein] + CoA + H(+). Functionally, protein acetyltransferase with dual specificity triggering both N-alpha-acetylation (NTA), with a large spectrum of modified N-termini, including methionine, alanine, serine, threonine and to a lower extent valine as substrates, and epsilon-lysine acetylation (KA). The chain is GCN5-related N-acetyltransferase 6, chloroplastic from Arabidopsis thaliana (Mouse-ear cress).